The primary structure comprises 138 residues: Small ribosomal subunit protein uS11c (138 aa).

Positions 1–23 are disordered; that stretch reads MKKPIPRIGSRRNGRIGSRKNGR.

This sequence belongs to the universal ribosomal protein uS11 family. In terms of assembly, part of the 30S ribosomal subunit.

It localises to the plastid. The protein resides in the chloroplast. This Amborella trichopoda protein is Small ribosomal subunit protein uS11c.